Consider the following 220-residue polypeptide: Elongation factor Ts (220 aa).

An involved in Mg(2+) ion dislocation from EF-Tu region spans residues 83 to 86 (TDFV).

It belongs to the EF-Ts family.

It is found in the cytoplasm. In terms of biological role, associates with the EF-Tu.GDP complex and induces the exchange of GDP to GTP. It remains bound to the aminoacyl-tRNA.EF-Tu.GTP complex up to the GTP hydrolysis stage on the ribosome. This is Elongation factor Ts from Synechococcus sp. (strain CC9605).